The chain runs to 171 residues: MHFNIFVEGEFNNVKGVFIDQSYPLRIQCTNCGSPHEKSVVLSEDSVGEGDFGEKVNLSITCRCCRRIMTLKILKLKEGREVKKHLLPTNFEDEFKEVWLSDMQKSRFLVSRIETNGAEVTSIESCILNLVSNQDVLFTNVNFEDRTVAKCNNLNMISSIIDFSLTVELAK.

This is an uncharacterized protein from Encephalitozoon cuniculi (strain GB-M1) (Microsporidian parasite).